Reading from the N-terminus, the 365-residue chain is P43 5S RNA-binding protein (365 aa).

C2H2-type zinc fingers lie at residues 15-39 (LRCP…MAGH), 45-69 (WKCG…VKRH), 75-100 (LSCP…LYKH), 106-130 (LKCF…LSVH), 136-160 (SVCD…QKRH), 163-187 (YRCS…VKKH), 191-213 (LQCA…KATH), 220-245 (LPCP…RKLH), and 251-275 (HRCP…LVVH).

The 42S RNP particle comprises four subunits each of which contains one molecule of 5S RNA, three molecules of tRNA, two molecules of p50 (EF1-alpha) and one molecule of the 5S RNA binding protein 43.

P43 is a 5S RNA binding protein which is a major constituent of oocytes and comprises part of a 42S ribonucleoprotein storage particle. The sequence is that of P43 5S RNA-binding protein from Xenopus laevis (African clawed frog).